The sequence spans 368 residues: Peptide chain release factor 2 (368 aa).

An N5-methylglutamine modification is found at glutamine 251.

It belongs to the prokaryotic/mitochondrial release factor family. Post-translationally, methylated by PrmC. Methylation increases the termination efficiency of RF2.

The protein localises to the cytoplasm. Functionally, peptide chain release factor 2 directs the termination of translation in response to the peptide chain termination codons UGA and UAA. The sequence is that of Peptide chain release factor 2 from Wolinella succinogenes (strain ATCC 29543 / DSM 1740 / CCUG 13145 / JCM 31913 / LMG 7466 / NCTC 11488 / FDC 602W) (Vibrio succinogenes).